The chain runs to 172 residues: DNA-directed RNA polymerase II subunit RPB7 (172 aa).

It belongs to the eukaryotic RPB7/RPC8 RNA polymerase subunit family. Component of the RNA polymerase II (Pol II) core complex consisting of 12 subunits: a ten-subunit catalytic core composed of POLR2A/RPB1, POLR2B/RPB2, POLR2C/RPB3, POLR2I/RPB9, POLR2J/RPB11, POLR2E/RPABC1, POLR2F/RPABC2, POLR2H/RPABC3, POLR2K/RPABC4 and POLR2L/RPABC5 and a mobile stalk composed of two subunits POLR2D/RPB4 and POLR2G/RPB7, protruding from the core and functioning primarily in transcription initiation. Part of Pol II(G) complex, in which Pol II core associates with an additional subunit POLR2M; unlike conventional Pol II, Pol II(G) functions as a transcriptional repressor. Part of TBP-based Pol II pre-initiation complex (PIC), in which Pol II core assembles with general transcription factors and other specific initiation factors including GTF2E1, GTF2E2, GTF2F1, GTF2F2, TCEA1, ERCC2, ERCC3, GTF2H2, GTF2H3, GTF2H4, GTF2H5, GTF2A1, GTF2A2, GTF2B and TBP; this large multi-subunit PIC complex mediates DNA unwinding and targets Pol II core to the transcription start site where the first phosphodiester bond forms.

Its subcellular location is the nucleus. Its function is as follows. Core component of RNA polymerase II (Pol II), a DNA-dependent RNA polymerase which synthesizes mRNA precursors and many functional non-coding RNAs using the four ribonucleoside triphosphates as substrates. Pol II is the central component of the basal RNA polymerase II transcription machinery. It is composed of mobile elements that move relative to each other. POLR2G/RPB7 is part of a subcomplex with POLR2D/RPB4 that binds to a pocket formed by POLR2A/RPB1, POLR2B/RPB2 and POLR2F/RPABC2 at the base of the clamp element. The POLR2D/RPB4-POLR2G/RPB7 subcomplex seems to lock the clamp via POLR2G/RPB7 in the closed conformation thus preventing double-stranded DNA to enter the active site cleft. The POLR2D/RPB4-POLR2G/RPB7 subcomplex binds single-stranded DNA and RNA. This chain is DNA-directed RNA polymerase II subunit RPB7 (POLR2G), found in Bos taurus (Bovine).